We begin with the raw amino-acid sequence, 61 residues long: Small ribosomal subunit protein uS14B (61 aa).

4 residues coordinate Zn(2+): cysteine 24, cysteine 27, cysteine 40, and cysteine 43.

The protein belongs to the universal ribosomal protein uS14 family. Zinc-binding uS14 subfamily. In terms of assembly, part of the 30S ribosomal subunit. Contacts proteins S3 and S10. The cofactor is Zn(2+).

Its function is as follows. Binds 16S rRNA, required for the assembly of 30S particles and may also be responsible for determining the conformation of the 16S rRNA at the A site. This is Small ribosomal subunit protein uS14B from Pediococcus pentosaceus (strain ATCC 25745 / CCUG 21536 / LMG 10740 / 183-1w).